Reading from the N-terminus, the 275-residue chain is Beta-lactamase OXA-2 (275 aa).

The N-terminal stretch at 1–21 (MAIRIFAILFSIFSLATFAHA) is a signal peptide. Residue serine 72 is the Acyl-ester intermediate of the active site. Lysine 75 is subject to N6-carboxylysine. 210–212 (KTG) serves as a coordination point for substrate.

The protein belongs to the class-D beta-lactamase family.

The catalysed reaction is a beta-lactam + H2O = a substituted beta-amino acid. Its function is as follows. This is an oxacillin-hydrolyzing beta-lactamase. The chain is Beta-lactamase OXA-2 (bla) from Escherichia coli.